We begin with the raw amino-acid sequence, 721 residues long: Probable acyl-activating enzyme 17, peroxisomal (721 aa).

The short motif at 719–721 (SKL) is the Microbody targeting signal element.

This sequence belongs to the ATP-dependent AMP-binding enzyme family. As to expression, expressed in leaves, stems and developing seeds.

It localises to the peroxisome. In terms of biological role, may act as an acid--thiol ligase that activates carboxylic acids by forming acyl-CoAs. The chain is Probable acyl-activating enzyme 17, peroxisomal (AAE17) from Arabidopsis thaliana (Mouse-ear cress).